An 850-amino-acid chain; its full sequence is Transforming growth factor beta receptor type 3 (850 aa).

An N-terminal signal peptide occupies residues methionine 1–alanine 22. Residues glycine 23–threonine 785 are Extracellular-facing. A disulfide bridge connects residues cysteine 54 and cysteine 199. Asparagine 143 and asparagine 491 each carry an N-linked (GlcNAc...) asparagine glycan. Residues lysine 454 to cysteine 728 form the ZP domain. The segment at serine 528–glutamate 557 is disordered. O-linked (Xyl...) (glycosaminoglycan) serine glycosylation is found at serine 533 and serine 544. N-linked (GlcNAc...) asparagine glycans are attached at residues asparagine 570, asparagine 589, and asparagine 696. 3 disulfides stabilise this stretch: cysteine 638–cysteine 704, cysteine 659–cysteine 728, and cysteine 709–cysteine 721. The tract at residues methionine 735–proline 749 is interaction with TGF-beta ligand. Residues valine 786–tyrosine 808 traverse the membrane as a helical segment. The Cytoplasmic portion of the chain corresponds to serine 809 to alanine 850. Positions arginine 817–alanine 833 are enriched in polar residues. A disordered region spans residues arginine 817–alanine 850. Over residues serine 835 to alanine 850 the composition is skewed to low complexity. Threonine 839 is modified (phosphothreonine).

Forms homodimers and homooligomers. Interacts with DYNLT4. Interacts with integrin ITGA5:ITGB1; this interaction promotes the internalization and trafficking of ITGA5:ITGB1 into endocytic vesicles. Interacts with TGFB1, BMP2, BMP5, BMP7 or GDF5 and inhibin A via the ligand binding domains. Interacts with ALK3/BMPR1A; this interaction results in the cell surface retention of BMPR1A. Interacts with ALK6/BMPR1B; this interaction enhances BMPR1B-mediated stimulation of the BMP signaling pathway. Interacts with the scaffolding protein beta-arrestin2/ARRB2; this interaction mediates internalization of TGFBR3 and thus regulates migration, actin cytoskeleton and activation of CDC42. In terms of processing, extensively modified by glycosaminoglycan groups (GAG). Post-translationally, phosphorylated in the cytoplasmic domain by the type II receptor TGFBR2 at THR-839 to mediate recruitment of ARRB2 and subsequent internalization of TGFBR2 and TGFBR3.

It is found in the cell membrane. The protein resides in the secreted. The protein localises to the extracellular space. It localises to the extracellular matrix. Its function is as follows. Cell surface receptor that regulates diverse cellular processes including cell proliferation, differentiation, migration, and apoptosis. Initiates BMP, inhibin, and TGF-beta signaling pathways by interacting with different ligands including TGFB1, BMP2, BMP5, BMP7 or GDF5. Alternatively, acts as a cell surface coreceptor for BMP ligands, serving to enhance ligand binding by differentially regulating BMPR1A/ALK3 and BMPR1B/ALK6 receptor trafficking. Promotes epithelial cell adhesion, focal adhesion formation and integrin signaling during epithelial cell spreading on fibronectin. By interacting with the scaffolding protein beta-arrestin2/ARRB2, regulates migration or actin cytoskeleton and promotes the activation of CDC42 as well as the inhibition of NF-kappa-B. In gonadotrope cells, acts as an inhibin A coreceptor and regulates follicle-stimulating hormone (FSH) levels and female fertility. Plays a role in the inhibition of directed and random cell migration in epithelial cells by altering the actin cytoskeletal organization. Participates in epithelial-mesenchymal transformation (EMT) upon binding to BMP2 or TGFB2, by activating the PAR6/SMURF1/RHOA pathway. The sequence is that of Transforming growth factor beta receptor type 3 (Tgfbr3) from Mus musculus (Mouse).